Here is a 350-residue protein sequence, read N- to C-terminus: 3-methylornithine synthase (350 aa).

The 223-residue stretch at 57–279 (NRVFLNCFIY…PKCLIPASLD (223 aa)) folds into the Radical SAM core domain. [4Fe-4S] cluster-binding residues include Cys-71 and Cys-75. Phe-77 contacts S-adenosyl-L-methionine. Cys-78 lines the [4Fe-4S] cluster pocket. Residues Asp-112, Ser-146, and Tyr-169 each coordinate (3R)-3-methyl-D-ornithine. Residues Glu-171, Arg-182, and Arg-190 each contribute to the S-adenosyl-L-methionine site. A (3R)-3-methyl-D-ornithine-binding site is contributed by Arg-235. The S-adenosyl-L-methionine site is built by Leu-240 and Gln-242. Ser-277, Thr-298, and Ser-299 together coordinate (3R)-3-methyl-D-ornithine.

This sequence belongs to the radical SAM superfamily. PylB family. [4Fe-4S] cluster serves as cofactor. The cofactor is S-adenosyl-L-methionine.

It catalyses the reaction L-lysine = (3R)-3-methyl-D-ornithine. The protein operates within amino-acid biosynthesis; L-pyrrolysine biosynthesis. In terms of biological role, catalyzes the isomerization of L-lysine to (3R)-3-methyl-D-ornithine via a radical-based mechanism. Is required for the biosynthesis of pyrrolysine. The polypeptide is 3-methylornithine synthase (pylB) (Methanosarcina acetivorans (strain ATCC 35395 / DSM 2834 / JCM 12185 / C2A)).